The primary structure comprises 351 residues: Histidinol-phosphate aminotransferase (351 aa).

K221 bears the N6-(pyridoxal phosphate)lysine mark.

Belongs to the class-II pyridoxal-phosphate-dependent aminotransferase family. Histidinol-phosphate aminotransferase subfamily. As to quaternary structure, homodimer. It depends on pyridoxal 5'-phosphate as a cofactor.

It carries out the reaction L-histidinol phosphate + 2-oxoglutarate = 3-(imidazol-4-yl)-2-oxopropyl phosphate + L-glutamate. Its pathway is amino-acid biosynthesis; L-histidine biosynthesis; L-histidine from 5-phospho-alpha-D-ribose 1-diphosphate: step 7/9. The sequence is that of Histidinol-phosphate aminotransferase from Staphylococcus saprophyticus subsp. saprophyticus (strain ATCC 15305 / DSM 20229 / NCIMB 8711 / NCTC 7292 / S-41).